Here is a 451-residue protein sequence, read N- to C-terminus: UPF0210 protein LMHCC_2097 (451 aa).

Belongs to the UPF0210 family. As to quaternary structure, homodimer.

The chain is UPF0210 protein LMHCC_2097 from Listeria monocytogenes serotype 4a (strain HCC23).